A 954-amino-acid polypeptide reads, in one-letter code: Glycine dehydrogenase (decarboxylating) (954 aa).

Lysine 699 bears the N6-(pyridoxal phosphate)lysine mark.

This sequence belongs to the GcvP family. The glycine cleavage system is composed of four proteins: P, T, L and H. Pyridoxal 5'-phosphate serves as cofactor.

The catalysed reaction is N(6)-[(R)-lipoyl]-L-lysyl-[glycine-cleavage complex H protein] + glycine + H(+) = N(6)-[(R)-S(8)-aminomethyldihydrolipoyl]-L-lysyl-[glycine-cleavage complex H protein] + CO2. The glycine cleavage system catalyzes the degradation of glycine. The P protein binds the alpha-amino group of glycine through its pyridoxal phosphate cofactor; CO(2) is released and the remaining methylamine moiety is then transferred to the lipoamide cofactor of the H protein. The chain is Glycine dehydrogenase (decarboxylating) from Nitrobacter winogradskyi (strain ATCC 25391 / DSM 10237 / CIP 104748 / NCIMB 11846 / Nb-255).